A 56-amino-acid polypeptide reads, in one-letter code: Large ribosomal subunit protein bL32 (56 aa).

Residues 1–16 show a composition bias toward basic residues; sequence MAVQKSKKSRSRRDMR. The disordered stretch occupies residues 1–56; the sequence is MAVQKSKKSRSRRDMRRSHDAIDGPTLSVDSTTGETHRRHHVTADGYYKGRKVVNK.

The protein belongs to the bacterial ribosomal protein bL32 family.

The protein is Large ribosomal subunit protein bL32 of Idiomarina loihiensis (strain ATCC BAA-735 / DSM 15497 / L2-TR).